A 622-amino-acid polypeptide reads, in one-letter code: Neuronal acetylcholine receptor subunit alpha-4 (622 aa).

The N-terminal stretch at 1–23 (MGFLVSKGNLLLLLCASIFPAFG) is a signal peptide. Residues 24–237 (HVETRAHAEE…ITYSFIIRRL (214 aa)) are Extracellular-facing. Asparagine 52 carries N-linked (GlcNAc...) asparagine glycosylation. Ca(2+) contacts are provided by valine 71 and glutamate 73. The N-linked (GlcNAc...) asparagine glycan is linked to asparagine 102. 2 cysteine pairs are disulfide-bonded: cysteine 156/cysteine 170 and cysteine 220/cysteine 221. A helical transmembrane segment spans residues 238-262 (PLFYTINLIIPCLLISCLTVLVFYL). Cysteine 266 carries S-palmitoyl cysteine lipidation. The next 2 helical transmembrane spans lie at 270-288 (ITLC…LLIT) and 304-325 (YLLF…VLNV). Over 326–595 (HHRSPRTHTM…WKYVAMVIDR (270 aa)) the chain is Cytoplasmic. Disordered stretches follow at residues 380-477 (WSET…TEEG) and 497-516 (QTNG…LNEE). Positions 390-407 (TTSSSPSPQSNEPSPTSS) are enriched in low complexity. 2 stretches are compositionally biased toward polar residues: residues 450–472 (SDTQ…YSPN) and 497–508 (QTNGHSSASPAS). The chain crosses the membrane as a helical span at residues 596 to 614 (IFLWMFIIVCLLGTVGLFL).

The protein belongs to the ligand-gated ion channel (TC 1.A.9) family. Acetylcholine receptor (TC 1.A.9.1) subfamily. Alpha-4/CHRNA4 sub-subfamily. In terms of assembly, neuronal AChR is composed of two different types of subunits: alpha and beta. CHRNA4 forms heteropentameric neuronal acetylcholine receptors with CHRNB2 and CHRNB4, as well as CHRNA5 and CHRNB3 as accesory subunits. Found in two major stoichiometric forms, LS (low agonist sensitivity): (CHRNA4)3:(CHRNB2)2 and HS (high agonist sensitivity): (CHRNA4)2:(CHRNB2)3, the two stoichiometric forms differ in their unitary conductance, calcium permeability, ACh sensitivity and potentiation by divalent cation. Cells produce predominantly an (CHRNA4)3:(CHRNB2)2 nAChR. The (CHRNA4)2:(CHRNB2)3 expression is selectively up-regulated by nicotine and has lower single channel conductance and calcium permeability. In the striatum, also forms CHRNA4:CHRNA6:CHRNB2 complexes. Also found in the stoichiometric form: (CHRNA4:CHRNB2)2:CHRNB3.

Its subcellular location is the synaptic cell membrane. The protein localises to the cell membrane. It catalyses the reaction Ca(2+)(in) = Ca(2+)(out). It carries out the reaction K(+)(in) = K(+)(out). The catalysed reaction is Na(+)(in) = Na(+)(out). With respect to regulation, activated by a myriad of ligands such as acetylcholine, cytisine, nicotine, choline and epibatidine. Channel potentiation by calcium is stoichiometry-selective, CHRNA4:CHRNB2 nACh receptor is achieved by calcium association with topographically distinct sites framed by anionic residues within the CHRNA4 subunit and between the CHRNA4 and CHRNB2 subunits. nAChR activity is inhibited by the antagonist alpha-conotoxins BuIA, PnIA, GID and MII, small disulfide-constrained peptides from cone snails. Component of neuronal acetylcholine receptors (nAChRs) that function as pentameric, ligand-gated cation channels with high calcium permeability among other activities. nAChRs are excitatory neurotrasnmitter receptors formed by a collection of nAChR subunits known to mediate synaptic transmission in the nervous system and the neuromuscular junction. Each nAchR subunit confers differential attributes to channel properties, including activation, deactivation and desensitization kinetics, pH sensitivity, cation permeability, and binding to allosteric modulators. CHRNA4 forms heteropentameric neuronal acetylcholine receptors with CHRNB2 and CHRNB4, as well as CHRNA5 and CHRNB3 as accesory subunits. Is the most abundant nAChR subtype expressed in the central nervous system. Found in two major stoichiometric forms,(CHRNA4)3:(CHRNB2)2 and (CHRNA4)2:(CHRNB2)3, the two stoichiometric forms differ in their unitary conductance, calcium permeability, ACh sensitivity and potentiation by divalent cation. Involved in the modulation of calcium-dependent signaling pathways, influences the release of neurotransmitters, including dopamine, glutamate and GABA. This Gallus gallus (Chicken) protein is Neuronal acetylcholine receptor subunit alpha-4 (CHRNA4).